We begin with the raw amino-acid sequence, 86 residues long: Small ribosomal subunit protein bS16 (86 aa).

It belongs to the bacterial ribosomal protein bS16 family.

This chain is Small ribosomal subunit protein bS16, found in Xylella fastidiosa (strain M12).